A 510-amino-acid polypeptide reads, in one-letter code: MVQDTEVVEAGTSKETETTVDVEKEIQECMGAGKKDLLCNDYSEAVNCFQEACTLLSGKHGQMAEECCEAYYYYGVSLLELARLENGVLGNALKGVPEEDADGDSDQEQEQFEKPDLPETEREKLREEVEAAMATEDEDTQEERGCPRRVEKKKEDDKPKESEKSAEKSDEKEKEEKQAKVESSTVKDVKDEKSSDKPVESSNTEEPGTSGTSASSSKENESEEDPDDISNMQLAWEMLELAKVLYKKHDKSKTNKQMVAQCHLKLGELGLEVENHPQAIGDFLECLVIQKDLLPETDRKLAETYYNLGLAYSFEKRYDNALEHYQSALDVLEARVDMLNELIESNEGNKEKEKEIISECKEVGELKELIPDINSKIEDVILAKKQMQKLDGSPFRQASEGESSSGLGASTSDDKPCSTIPIRKVAPTSVPVAKDSPSDITHLVRRKRPSPDEDNQPAESKENESKKAKQEETEEATNGHSAVKKDTDVTDKNGTNGHSKTPKKDAAKRR.

The tract at residues 95 to 227 (GVPEEDADGD…KENESEEDPD (133 aa)) is disordered. Residues 98–110 (EEDADGDSDQEQE) show a composition bias toward acidic residues. Basic and acidic residues-rich tracts occupy residues 111-129 (QFEKPDLPETEREKLREEV) and 142-199 (EERG…DKPV). The segment covering 204–217 (TEEPGTSGTSASSS) has biased composition (low complexity). TPR repeat units follow at residues 260 to 293 (AQCHLKLGELGLEVENHPQAIGDFLECLVIQKDL) and 302 to 335 (AETYYNLGLAYSFEKRYDNALEHYQSALDVLEAR). The disordered stretch occupies residues 391–510 (DGSPFRQASE…TPKKDAAKRR (120 aa)). Residues 398–411 (ASEGESSSGLGAST) show a composition bias toward low complexity. Short sequence motifs (nuclear localization signal) lie at residues 444-451 (VRRKRPSP) and 465-471 (SKKAKQE). Residues 459-471 (ESKENESKKAKQE) are compositionally biased toward basic and acidic residues.

Belongs to the NASP family. In terms of tissue distribution, embryo and larvae.

The protein resides in the nucleus. May function as a nucleosome assembly factor during rapid embryonic cell divisions. In Halocynthia roretzi (Sea squirt), this protein is Protein HGV2 (HGV2).